Reading from the N-terminus, the 426-residue chain is Synaptotagmin-13 (426 aa).

Over 1 to 6 the chain is Vesicular; sequence MVLSVP. The chain crosses the membrane as a helical span at residues 7-29; it reads VIALGATLGTATSILALCGVTCL. The Cytoplasmic portion of the chain corresponds to 30–426; sequence CRHMHPKKGL…QIAMWHQLHL (397 aa). C2 domains follow at residues 158 to 275 and 287 to 422; these read QAPK…AQWG and GAGE…AMWH.

The protein belongs to the synaptotagmin family. Interacts with NRXN1. As to expression, expressed in brain, heart, spleen, lung and testis.

It is found in the cytoplasmic vesicle membrane. Its function is as follows. May be involved in transport vesicle docking to the plasma membrane. In Mus musculus (Mouse), this protein is Synaptotagmin-13 (Syt13).